We begin with the raw amino-acid sequence, 287 residues long: Pantothenate synthetase (287 aa).

30 to 37 is a binding site for ATP; sequence MGNLHSGH. Catalysis depends on His37, which acts as the Proton donor. Gln61 contacts (R)-pantoate. Gln61 contributes to the beta-alanine binding site. Residue 149–152 participates in ATP binding; it reads GEKD. Gln155 serves as a coordination point for (R)-pantoate. Residues Val178 and 186–189 contribute to the ATP site; that span reads LSSR.

It belongs to the pantothenate synthetase family. In terms of assembly, homodimer.

The protein resides in the cytoplasm. The catalysed reaction is (R)-pantoate + beta-alanine + ATP = (R)-pantothenate + AMP + diphosphate + H(+). It participates in cofactor biosynthesis; (R)-pantothenate biosynthesis; (R)-pantothenate from (R)-pantoate and beta-alanine: step 1/1. Catalyzes the condensation of pantoate with beta-alanine in an ATP-dependent reaction via a pantoyl-adenylate intermediate. This Pseudomonas putida (strain W619) protein is Pantothenate synthetase.